We begin with the raw amino-acid sequence, 150 residues long: 1,4-dihydroxy-2-naphthoyl-CoA hydrolase (150 aa).

Asp19 is a catalytic residue.

It belongs to the 4-hydroxybenzoyl-CoA thioesterase family. DHNA-CoA hydrolase subfamily.

The catalysed reaction is 1,4-dihydroxy-2-naphthoyl-CoA + H2O = 1,4-dihydroxy-2-naphthoate + CoA + H(+). It functions in the pathway cofactor biosynthesis; phylloquinone biosynthesis. The protein operates within quinol/quinone metabolism; 1,4-dihydroxy-2-naphthoate biosynthesis; 1,4-dihydroxy-2-naphthoate from chorismate: step 7/7. Catalyzes the hydrolysis of 1,4-dihydroxy-2-naphthoyl-CoA (DHNA-CoA) to 1,4-dihydroxy-2-naphthoate (DHNA), a reaction involved in phylloquinone (vitamin K1) biosynthesis. The protein is 1,4-dihydroxy-2-naphthoyl-CoA hydrolase of Prochlorococcus marinus subsp. pastoris (strain CCMP1986 / NIES-2087 / MED4).